A 509-amino-acid chain; its full sequence is MDPPRASHLSPRKKRPRQTGALMASSPQDIKFQDLVVFILEKKMGTTRRAFLMELARRKGFRVENELSDSVTHIVAENNSGSDVLEWLQAQKVQVSSQPELLDVSWLIECIRAGKPVEMTGKHQLVVRRDYSDSTNPGPPKTPPIAVQKISQYACQRRTTLNNCNQIFTDAFDILAENCEFRENEDSCVTFMRAASVLKSLPFTIISMKDTEGIPCLGSKVKGIIEEIIEDGESSEVKAVLNDERYQSFKLFTSVFGVGLKTSEKWFRMGFRTLSKVRSDKSLKFTRMQKAGFLYYEDLVSCVTRAEAEAVSVLVKEAVWAFLPDAFVTMTGGFRRGKKMGHDVDFLITSPGSTEDEEQLLQKVMNLWEKKGLLLYYDLVESTFEKLRLPSRKVDALDHFQKCFLIFKLPRQRVDSDQSSWQEGKTWKAIRVDLVLCPYERRAFALLGWTGSRQFERDLRRYATHERKMILDNHALYDKTKRIFLKAESEEEIFAHLGLDYIEPWERNA.

The disordered stretch occupies residues 1 to 24 (MDPPRASHLSPRKKRPRQTGALMA). The Nuclear localization signal signature appears at 11-17 (PRKKRPR). The BRCT domain maps to 27-124 (PQDIKFQDLV…KPVEMTGKHQ (98 aa)). Phosphoserine is present on serine 134. The tract at residues 151–509 (SQYACQRRTT…DYIEPWERNA (359 aa)) is mediates interaction with DNTTIP2. The interval 258–262 (VGLKT) is involved in DNA binding. Residues 333 to 338 (GFRRGK) and 342 to 345 (HDVD) contribute to the a 2'-deoxyribonucleoside 5'-triphosphate site. Mg(2+)-binding residues include aspartate 343, aspartate 345, and aspartate 433. An a 2'-deoxyribonucleoside 5'-triphosphate-binding site is contributed by 448–449 (GW).

This sequence belongs to the DNA polymerase type-X family. In terms of assembly, interacts with PRP19 and DNTTIP1. Forms a ternary complex with DNTTIP2 and core histone. Released from this complex by PCNA. Interacts with TRERF1. Mg(2+) serves as cofactor.

The protein localises to the nucleus. The enzyme catalyses DNA(n) + a 2'-deoxyribonucleoside 5'-triphosphate = DNA(n+1) + diphosphate. Functionally, template-independent DNA polymerase which catalyzes the random addition of deoxynucleoside 5'-triphosphate to the 3'-end of a DNA initiator. One of the in vivo functions of this enzyme is the addition of nucleotides at the junction (N region) of rearranged Ig heavy chain and T-cell receptor gene segments during the maturation of B- and T-cells. This is DNA nucleotidylexotransferase (DNTT) from Homo sapiens (Human).